We begin with the raw amino-acid sequence, 529 residues long: UDP-glucuronosyltransferase 2B9 (529 aa).

The first 21 residues, 1–21, serve as a signal peptide directing secretion; it reads MSVKWTSVILLIQLSFYFSSG. 3 N-linked (GlcNAc...) asparagine glycosylation sites follow: Asn-67, Asn-68, and Asn-88. The chain crosses the membrane as a helical span at residues 494–514; that stretch reads IGFLLACVATVIFVIMKCCLF.

The protein belongs to the UDP-glycosyltransferase family.

The protein localises to the microsome membrane. It localises to the endoplasmic reticulum membrane. It carries out the reaction glucuronate acceptor + UDP-alpha-D-glucuronate = acceptor beta-D-glucuronoside + UDP + H(+). Its function is as follows. UDPGT is of major importance in the conjugation and subsequent elimination of potentially toxic xenobiotics and endogenous compounds. This isozyme is active on C18, C19, and C21 steroids, bile acids, and several xenobiotics including eugenol, 1-naphthol, and p-nitrophenol. The protein is UDP-glucuronosyltransferase 2B9 (UGT2B9) of Macaca fascicularis (Crab-eating macaque).